A 117-amino-acid chain; its full sequence is Modulator protein MzrA (117 aa).

Over 1-11 (MMTNRRFRKPS) the chain is Cytoplasmic. A helical membrane pass occupies residues 12–29 (AWRLLLLLLPLVVLLSMS). Residues 30–117 (SRRLPDEVML…SNGTSPVTRS (88 aa)) are Periplasmic-facing.

This sequence belongs to the MzrA family. Interacts with EnvZ.

The protein resides in the cell inner membrane. Modulates the activity of the EnvZ/OmpR two-component regulatory system, probably by directly modulating EnvZ enzymatic activity and increasing stability of phosphorylated OmpR. This is Modulator protein MzrA from Dickeya dadantii (strain 3937) (Erwinia chrysanthemi (strain 3937)).